The primary structure comprises 301 residues: GTPase Era (301 aa).

Residues 7 to 175 enclose the Era-type G domain; that stretch reads YCGFIAIVGR…AAIVRKHLPE (169 aa). A G1 region spans residues 15-22; the sequence is GRPNVGKS. 15-22 provides a ligand contact to GTP; that stretch reads GRPNVGKS. Residues 41–45 are G2; that stretch reads QTTRH. Residues 62–65 form a G3 region; the sequence is DTPG. Residues 62 to 66 and 124 to 127 each bind GTP; these read DTPGL and NKVD. Residues 124–127 are G4; the sequence is NKVD. The G5 stretch occupies residues 154–156; the sequence is ISA. Residues 206–283 form the KH type-2 domain; the sequence is LGAELPYSVT…HLELWVKVKS (78 aa).

The protein belongs to the TRAFAC class TrmE-Era-EngA-EngB-Septin-like GTPase superfamily. Era GTPase family. Monomer.

It is found in the cytoplasm. It localises to the cell inner membrane. An essential GTPase that binds both GDP and GTP, with rapid nucleotide exchange. Plays a role in 16S rRNA processing and 30S ribosomal subunit biogenesis and possibly also in cell cycle regulation and energy metabolism. This is GTPase Era from Escherichia coli O1:K1 / APEC.